We begin with the raw amino-acid sequence, 375 residues long: Succinyl-diaminopimelate desuccinylase (375 aa).

Zn(2+) is bound at residue histidine 66. Aspartate 68 is a catalytic residue. Position 99 (aspartate 99) interacts with Zn(2+). Glutamate 133 (proton acceptor) is an active-site residue. Glutamate 134, glutamate 162, and histidine 348 together coordinate Zn(2+).

This sequence belongs to the peptidase M20A family. DapE subfamily. In terms of assembly, homodimer. The cofactor is Zn(2+). Requires Co(2+) as cofactor.

The catalysed reaction is N-succinyl-(2S,6S)-2,6-diaminopimelate + H2O = (2S,6S)-2,6-diaminopimelate + succinate. It participates in amino-acid biosynthesis; L-lysine biosynthesis via DAP pathway; LL-2,6-diaminopimelate from (S)-tetrahydrodipicolinate (succinylase route): step 3/3. Functionally, catalyzes the hydrolysis of N-succinyl-L,L-diaminopimelic acid (SDAP), forming succinate and LL-2,6-diaminopimelate (DAP), an intermediate involved in the bacterial biosynthesis of lysine and meso-diaminopimelic acid, an essential component of bacterial cell walls. This Salmonella typhi protein is Succinyl-diaminopimelate desuccinylase.